Here is a 264-residue protein sequence, read N- to C-terminus: tRNA pseudouridine synthase A (264 aa).

Aspartate 51 (nucleophile) is an active-site residue. Tyrosine 109 provides a ligand contact to substrate.

This sequence belongs to the tRNA pseudouridine synthase TruA family. In terms of assembly, homodimer.

It catalyses the reaction uridine(38/39/40) in tRNA = pseudouridine(38/39/40) in tRNA. Formation of pseudouridine at positions 38, 39 and 40 in the anticodon stem and loop of transfer RNAs. This Aromatoleum aromaticum (strain DSM 19018 / LMG 30748 / EbN1) (Azoarcus sp. (strain EbN1)) protein is tRNA pseudouridine synthase A.